Reading from the N-terminus, the 308-residue chain is Glutaminase (308 aa).

Positions 66, 117, 161, 168, 192, 244, and 262 each coordinate substrate.

It belongs to the glutaminase family. As to quaternary structure, homotetramer.

It carries out the reaction L-glutamine + H2O = L-glutamate + NH4(+). This chain is Glutaminase, found in Salmonella arizonae (strain ATCC BAA-731 / CDC346-86 / RSK2980).